The chain runs to 433 residues: Pectinesterase B (433 aa).

Positions 1-21 are cleaved as a signal peptide; that stretch reads MSLTHYSGLAAAVSMSLILTA. Residue cysteine 22 is the site of N-palmitoyl cysteine attachment. The S-diacylglycerol cysteine moiety is linked to residue cysteine 22. Over 22–433 the chain is Periplasmic; the sequence is CGGQTPNSAR…EYNTQVLLHE (412 aa). Residues threonine 202 and glutamine 236 each contribute to the substrate site. The Proton donor role is filled by aspartate 259. Aspartate 292 acts as the Nucleophile in catalysis. Arginine 356 and tryptophan 358 together coordinate substrate.

The protein belongs to the pectinesterase family.

The protein resides in the cell outer membrane. It carries out the reaction [(1-&gt;4)-alpha-D-galacturonosyl methyl ester](n) + n H2O = [(1-&gt;4)-alpha-D-galacturonosyl](n) + n methanol + n H(+). The protein operates within glycan metabolism; pectin degradation; 2-dehydro-3-deoxy-D-gluconate from pectin: step 1/5. In terms of biological role, probably involved in the degradation of methylated oligogalacturonides present in the periplasm. More active on methylated oligogalacturides than on pectin. This Dickeya dadantii (strain 3937) (Erwinia chrysanthemi (strain 3937)) protein is Pectinesterase B.